A 1057-amino-acid polypeptide reads, in one-letter code: Carbamoyl phosphate synthase large chain (1057 aa).

A carboxyphosphate synthetic domain region spans residues 1–401; that stretch reads MPKRDDIQTI…SLLKAIRSLE (401 aa). The ATP site is built by Arg-129, Arg-169, Gly-175, Gly-176, Lys-208, Ile-210, Glu-215, Gly-241, Ile-242, His-243, Gln-284, and Glu-298. The ATP-grasp 1 domain occupies 133–327; the sequence is RTLMNDLNVP…IAKLAAKIAV (195 aa). Mg(2+)-binding residues include Gln-284, Glu-298, and Asn-300. The Mn(2+) site is built by Gln-284, Glu-298, and Asn-300. The interval 402–546 is oligomerization domain; it reads YGVHHLGLPN…YGTYEDENES (145 aa). The carbamoyl phosphate synthetic domain stretch occupies residues 547-929; the sequence is IVTDKEKILV…ALYKGLTGSG (383 aa). An ATP-grasp 2 domain is found at 671 to 861; that stretch reads EALLREISVP…MAQLAMRAIM (191 aa). Residues Arg-707, Arg-746, Leu-748, Glu-752, Gly-777, Val-778, His-779, Ser-780, Gln-820, and Glu-832 each coordinate ATP. Residues Gln-820, Glu-832, and Asn-834 each coordinate Mg(2+). The Mn(2+) site is built by Gln-820, Glu-832, and Asn-834. Residues 930 to 1057 enclose the MGS-like domain; it reads FEVKDHGTVL…ESMTFTMRNV (128 aa). The segment at 930–1057 is allosteric domain; it reads FEVKDHGTVL…ESMTFTMRNV (128 aa).

Belongs to the CarB family. As to quaternary structure, composed of two chains; the small (or glutamine) chain promotes the hydrolysis of glutamine to ammonia, which is used by the large (or ammonia) chain to synthesize carbamoyl phosphate. Tetramer of heterodimers (alpha,beta)4. Requires Mg(2+) as cofactor. Mn(2+) serves as cofactor.

It carries out the reaction hydrogencarbonate + L-glutamine + 2 ATP + H2O = carbamoyl phosphate + L-glutamate + 2 ADP + phosphate + 2 H(+). The enzyme catalyses hydrogencarbonate + NH4(+) + 2 ATP = carbamoyl phosphate + 2 ADP + phosphate + 2 H(+). It participates in amino-acid biosynthesis; L-arginine biosynthesis; carbamoyl phosphate from bicarbonate: step 1/1. Its pathway is pyrimidine metabolism; UMP biosynthesis via de novo pathway; (S)-dihydroorotate from bicarbonate: step 1/3. Large subunit of the glutamine-dependent carbamoyl phosphate synthetase (CPSase). CPSase catalyzes the formation of carbamoyl phosphate from the ammonia moiety of glutamine, carbonate, and phosphate donated by ATP, constituting the first step of 2 biosynthetic pathways, one leading to arginine and/or urea and the other to pyrimidine nucleotides. The large subunit (synthetase) binds the substrates ammonia (free or transferred from glutamine from the small subunit), hydrogencarbonate and ATP and carries out an ATP-coupled ligase reaction, activating hydrogencarbonate by forming carboxy phosphate which reacts with ammonia to form carbamoyl phosphate. In Staphylococcus epidermidis (strain ATCC 35984 / DSM 28319 / BCRC 17069 / CCUG 31568 / BM 3577 / RP62A), this protein is Carbamoyl phosphate synthase large chain.